The primary structure comprises 240 residues: Uridylate kinase (240 aa).

12–15 (KLSG) contributes to the ATP binding site. Residues 20–25 (GKQGFG) form an involved in allosteric activation by GTP region. Gly54 lines the UMP pocket. Positions 55 and 59 each coordinate ATP. UMP-binding positions include Asp74 and 135–142 (TGNPYFST). Asn163, Tyr169, and Asp172 together coordinate ATP.

It belongs to the UMP kinase family. As to quaternary structure, homohexamer.

The protein localises to the cytoplasm. The enzyme catalyses UMP + ATP = UDP + ADP. The protein operates within pyrimidine metabolism; CTP biosynthesis via de novo pathway; UDP from UMP (UMPK route): step 1/1. With respect to regulation, allosterically activated by GTP. Inhibited by UTP. Its function is as follows. Catalyzes the reversible phosphorylation of UMP to UDP. This chain is Uridylate kinase, found in Geobacillus kaustophilus (strain HTA426).